The sequence spans 392 residues: MSAPQKCAAVVVGAGPAGLAVIGNLLERLPGSKIAWIDPYFQAGRVNRRYREVPSNTKVSLFQAYASAVQPFRTVINTTPTPNAFSTMTKLEQDKGCHLHYAADMCRALTEGILKSDEVYRCCGIVTHADLKENLSQWTVRIKSYESLEEVQVVAPRLILCTGSSPTLLRIPVPALSIQRLDLDVVLKPSELVRAIHTGSPQTVAVVGASHSAILALLNLVDLARSSHPQLRIKWFTRNALRYAEYMDGWILRDNTGLKGVAADFAREQLEDDRLPKSEAGRFIEKIDCSDGKETAAYEAHLPSCSHIVQAVGFTRDPLPELARDGMPLKAEFDHESGGFSDQDGRVIKGLYGAGIAFPERVVDPYNNVEYAVGFFKFMKFIKRVCPRWLAA.

The first 20 residues, 1 to 20, serve as a signal peptide directing secretion; the sequence is MSAPQKCAAVVVGAGPAGLA. The N-linked (GlcNAc...) asparagine glycan is linked to Asn-134.

Monooxygenase; part of the gene cluster that mediates the biosynthesis of agnestins, dihydroxy-xanthone metabolites. The pathway begins with the assembly and cyclization of atrochrysone thioester by the non-reducing polyketide synthase Agnpks1. The atrochrysone carboxyl ACP thioesterase AgnL7 then breaks the thioester bond and releases the atrochrysone carboxylic acid as the first enzyme-free intermediate. The decarboxylase AgnL1 then catalyzes the concerted decarboxylation-elimination required to convert atochrysone carboxylic acid into emodin anthrone, which is further oxidized to emodin by the anthrone oxygenase AgnL2. Emodin then undergoes reduction catalyzed by the oxidoreductase AgnL4 to yield the dihydroquinone tautomer which is the substrate for reduction by the short chain dehydrogenase AgnL6 reduction to produce hydroxyketone, followed by AgnL8 dehydration and likely spontaneous autoxidation to chrysophanol. Baeyer-Villiger oxidation by the oxidase AgnL3 leads to monodictyphenone via cleavage of the C-10/C-10a bond of chrysophanol. Alternative cleavage at the C-4a/C-10 bond of chrysophanol also leads to the formation some cephalone F. Further conversion to agnestins A and B, requires reduction to dihydro-monodictyphenone, oxidation to agnestin C probably via an epoxide, and rearrangement to either agnestin A or agnestin B directly, although agnestin A or agnestin B can also interconvert. Within the cluster, AgnR1 is the only unassigned oxidoreductase present which could be involved in this conversion. However, AgnR1 seems not to be involved in this step, and thus genes involved in the proposed oxidation/reduction may be located elsewhere on the genome. Further agnestin A derivatives are probably formed by spontaneous decarboxylations, dehydrations and methanolysis reactions. The protein is Monooxygenase AgnR1 of Paecilomyces divaricatus (Penicillium divaricatum).